A 218-amino-acid polypeptide reads, in one-letter code: Guanylate kinase (218 aa).

Positions 5–188 (GNLFILSAPS…ALLDLTTIVN (184 aa)) constitute a Guanylate kinase-like domain. 12-19 (APSGAGKS) lines the ATP pocket.

This sequence belongs to the guanylate kinase family.

The protein resides in the cytoplasm. It carries out the reaction GMP + ATP = GDP + ADP. Essential for recycling GMP and indirectly, cGMP. This Colwellia psychrerythraea (strain 34H / ATCC BAA-681) (Vibrio psychroerythus) protein is Guanylate kinase.